The primary structure comprises 342 residues: Isopentenyl-diphosphate delta-isomerase (342 aa).

11–12 (RK) is a binding site for substrate. Residues S68, 69 to 71 (SMT), S99, and N127 each bind FMN. 99–101 (SMR) is a binding site for substrate. E163 lines the Mg(2+) pocket. FMN is bound by residues K194, T224, and 295 to 296 (AG).

Belongs to the IPP isomerase type 2 family. In terms of assembly, homooctamer. Dimer of tetramers. FMN is required as a cofactor. NADPH serves as cofactor. It depends on Mg(2+) as a cofactor.

It localises to the cytoplasm. The enzyme catalyses isopentenyl diphosphate = dimethylallyl diphosphate. Functionally, involved in the biosynthesis of isoprenoids. Catalyzes the 1,3-allylic rearrangement of the homoallylic substrate isopentenyl (IPP) to its allylic isomer, dimethylallyl diphosphate (DMAPP). The protein is Isopentenyl-diphosphate delta-isomerase of Rickettsia typhi (strain ATCC VR-144 / Wilmington).